The following is a 539-amino-acid chain: NADH-quinone oxidoreductase subunit N 2 (539 aa).

13 helical membrane-spanning segments follow: residues 11-31, 52-72, 106-126, 141-161, 193-213, 248-268, 296-316, 329-349, 357-377, 385-405, 429-449, 462-484, and 500-520; these read LIPE…DVLT, LMGL…FSWM, PLTH…VILT, LILF…LIMI, YIFG…LLGL, GVAI…VAIV, AGFF…SILG, WTSL…LAAL, MLAY…VGTQ, LMYL…LALV, LLLT…GFFV, AKWL…LRFL, and VGFG…GLGI.

Belongs to the complex I subunit 2 family. As to quaternary structure, NDH-1 is composed of 14 different subunits. Subunits NuoA, H, J, K, L, M, N constitute the membrane sector of the complex.

It is found in the cell membrane. The enzyme catalyses a quinone + NADH + 5 H(+)(in) = a quinol + NAD(+) + 4 H(+)(out). In terms of biological role, NDH-1 shuttles electrons from NADH, via FMN and iron-sulfur (Fe-S) centers, to quinones in the respiratory chain. The immediate electron acceptor for the enzyme in this species is believed to be ubiquinone. Couples the redox reaction to proton translocation (for every two electrons transferred, four hydrogen ions are translocated across the cytoplasmic membrane), and thus conserves the redox energy in a proton gradient. This Herpetosiphon aurantiacus (strain ATCC 23779 / DSM 785 / 114-95) protein is NADH-quinone oxidoreductase subunit N 2.